A 320-amino-acid chain; its full sequence is Peptidase 1 (320 aa).

Positions 1-18 (MKIVLAIASLLALSAVYA) are cleaved as a signal peptide. Positions 19–98 (RPSSIKTFEE…LKTQFDLNAE (80 aa)) are cleaved as a propeptide — activation peptide. 3 disulfide bridges follow: Cys102-Cys215, Cys129-Cys169, and Cys163-Cys201. Cys132 is an active-site residue. N-linked (GlcNAc...) asparagine glycosylation is present at Asn150. Active-site residues include His268 and Asn288.

Belongs to the peptidase C1 family. Post-translationally, N-glycosylated. N-glycanase treatment does not completely remove carbohydrates, suggesting that the protein contains additional glycosylation sites.

The protein localises to the secreted. It catalyses the reaction Broad endopeptidase specificity.. In terms of biological role, thiol protease, with a preference for substrates with a large hydrophobic side chain in the P2 position, or with basic residues. This Dermatophagoides pteronyssinus (European house dust mite) protein is Peptidase 1 (DERP1).